The following is a 209-amino-acid chain: Large ribosomal subunit protein uL3 (209 aa).

A disordered region spans residues phenylalanine 128–alanine 163.

Belongs to the universal ribosomal protein uL3 family. Part of the 50S ribosomal subunit. Forms a cluster with proteins L14 and L19.

In terms of biological role, one of the primary rRNA binding proteins, it binds directly near the 3'-end of the 23S rRNA, where it nucleates assembly of the 50S subunit. This chain is Large ribosomal subunit protein uL3, found in Chlorobium phaeobacteroides (strain DSM 266 / SMG 266 / 2430).